Here is a 224-residue protein sequence, read N- to C-terminus: UPF0758 protein VS_0182 (224 aa).

Positions 1–21 (MPISKMPVESMPREKLLSRGP) are disordered. The 123-residue stretch at 102 to 224 (ALTSPSHTKL…VISFAERGWI (123 aa)) folds into the MPN domain. Histidine 173, histidine 175, and aspartate 186 together coordinate Zn(2+). Positions 173–186 (HNHPSGVAEPSQAD) match the JAMM motif motif.

Belongs to the UPF0758 family.

The protein is UPF0758 protein VS_0182 of Vibrio atlanticus (strain LGP32) (Vibrio splendidus (strain Mel32)).